Here is a 699-residue protein sequence, read N- to C-terminus: D-(-)-3-hydroxybutyrate oligomer hydrolase (699 aa).

Residues 1 to 19 form the signal peptide; that stretch reads MNPSLCIAVAFACPLSALA. The active-site Charge relay system is Ser-303.

This sequence belongs to the D-(-)-3-hydroxybutyrate oligomer hydrolase family.

It is found in the secreted. The catalysed reaction is (3R)-hydroxybutanoate dimer + H2O = 2 (R)-3-hydroxybutanoate + H(+). Its pathway is lipid metabolism; butanoate metabolism. Participates in the degradation of poly-3-hydroxybutyrate (PHB). It works downstream of poly(3-hydroxybutyrate) depolymerase, hydrolyzing D(-)-3-hydroxybutyrate oligomers of various length (3HB-oligomers) into 3HB-monomers. The protein is D-(-)-3-hydroxybutyrate oligomer hydrolase of Azoarcus sp. (strain BH72).